A 142-amino-acid chain; its full sequence is Transcription antitermination protein NusB (142 aa).

The protein belongs to the NusB family.

In terms of biological role, involved in transcription antitermination. Required for transcription of ribosomal RNA (rRNA) genes. Binds specifically to the boxA antiterminator sequence of the ribosomal RNA (rrn) operons. This chain is Transcription antitermination protein NusB, found in Thermotoga petrophila (strain ATCC BAA-488 / DSM 13995 / JCM 10881 / RKU-1).